The primary structure comprises 60 residues: uncharacterized protein (60 aa).

This is an uncharacterized protein from Saccharomyces cerevisiae (strain ATCC 204508 / S288c) (Baker's yeast).